Consider the following 380-residue polypeptide: Alcohol dehydrogenase 2 (380 aa).

Positions 48, 50, 70, 100, 103, 106, 114, and 178 each coordinate Zn(2+). An alcohol is bound by residues Thr50 and His70. Thr50 serves as a coordination point for NAD(+). Residues 203–208 (GLGAVG), Asp227, Arg232, Thr273, Val296, 296–298 (VGV), Phe323, and Arg373 each bind NAD(+).

Belongs to the zinc-containing alcohol dehydrogenase family. As to quaternary structure, homodimer. Homotetramer. Zn(2+) is required as a cofactor.

It is found in the cytoplasm. It carries out the reaction a primary alcohol + NAD(+) = an aldehyde + NADH + H(+). The catalysed reaction is a secondary alcohol + NAD(+) = a ketone + NADH + H(+). This is Alcohol dehydrogenase 2 (ADH2) from Solanum tuberosum (Potato).